Consider the following 280-residue polypeptide: Homeobox protein SMOX-1 (280 aa).

The segment at 61–88 is disordered; sequence PNNNSFQLNTTNDSNNNNTTNNGNDSRS. A compositionally biased stretch (low complexity) spans 69–85; sequence NTTNDSNNNNTTNNGND. Positions 214–219 match the Antp-type hexapeptide motif; the sequence is VYPWMN. A DNA-binding region (homeobox) is located at residues 229–280; it reads QKRTRQTYTRYQTLELEKEFHFNKYLTRRRRIEIAHTLTLTERQIKIWFQNR.

The protein belongs to the Antp homeobox family.

The protein localises to the nucleus. This is Homeobox protein SMOX-1 (SMOX-1) from Schistosoma mansoni (Blood fluke).